The following is a 210-amino-acid chain: Redox-sensing transcriptional repressor Rex (210 aa).

Positions 17-56 form a DNA-binding region, H-T-H motif; that stretch reads KYHRYLGNLMRNDVDRISSKELSEKIGFTASQIRQDLNCF. NAD(+) is bound at residue 91–96; that stretch reads GAGNIG.

This sequence belongs to the transcriptional regulatory Rex family. As to quaternary structure, homodimer.

It localises to the cytoplasm. Functionally, modulates transcription in response to changes in cellular NADH/NAD(+) redox state. The polypeptide is Redox-sensing transcriptional repressor Rex (Clostridium kluyveri (strain ATCC 8527 / DSM 555 / NBRC 12016 / NCIMB 10680 / K1)).